Reading from the N-terminus, the 381-residue chain is Alkanesulfonate monooxygenase (381 aa).

This sequence belongs to the SsuD family. As to quaternary structure, homotetramer.

The enzyme catalyses an alkanesulfonate + FMNH2 + O2 = an aldehyde + FMN + sulfite + H2O + 2 H(+). Catalyzes the desulfonation of aliphatic sulfonates. The protein is Alkanesulfonate monooxygenase of Escherichia coli O6:H1 (strain CFT073 / ATCC 700928 / UPEC).